The chain runs to 682 residues: DNA-directed RNA polymerase subunit beta' (682 aa).

Zn(2+) is bound by residues Cys-69, Cys-71, Cys-87, and Cys-90. Mg(2+) contacts are provided by Asp-489, Asp-491, and Asp-493.

This sequence belongs to the RNA polymerase beta' chain family. RpoC1 subfamily. As to quaternary structure, in plastids the minimal PEP RNA polymerase catalytic core is composed of four subunits: alpha, beta, beta', and beta''. When a (nuclear-encoded) sigma factor is associated with the core the holoenzyme is formed, which can initiate transcription. The cofactor is Mg(2+). It depends on Zn(2+) as a cofactor.

It localises to the plastid. It is found in the chloroplast. The enzyme catalyses RNA(n) + a ribonucleoside 5'-triphosphate = RNA(n+1) + diphosphate. Functionally, DNA-dependent RNA polymerase catalyzes the transcription of DNA into RNA using the four ribonucleoside triphosphates as substrates. In Hordeum vulgare (Barley), this protein is DNA-directed RNA polymerase subunit beta'.